Consider the following 298-residue polypeptide: Trimeric intracellular cation channel type A (298 aa).

At 1–18 (MDLMSALSLGELALSFSR) the chain is on the lumenal side. Residues 19 to 39 (VPLFPVFDLSYFIVSIIYLKY) form a helical membrane-spanning segment. Over 40 to 51 (EPGAVELSRRHP) the chain is Cytoplasmic. A helical transmembrane segment spans residues 52–72 (VASWLCAMLHCFGSYILADLL). Residues 73–85 (LGEPIIDYFSNSS) are Lumenal-facing. Gly74 contributes to the Ca(2+) binding site. The helical transmembrane segment at 86-106 (SILLASGVWYLIFFCPLDLFY) threads the bilayer. Over 107-144 (KCVCFLPVKLIFVAMKEVVRVRKIAVGIHHAHHHYHHG) the chain is Cytoplasmic. The a 1,2-diacyl-sn-glycero-3-phospho-(1D-myo-inositol-4,5-bisphosphate) site is built by Lys122 and Arg126. The helical transmembrane segment at 145–165 (WFIMIATGWVKGSGVALLSNV) threads the bilayer. The Lumenal portion of the chain corresponds to 166 to 178 (EQLLRGVWKPETN). A helical transmembrane segment spans residues 179-199 (EILHMSFPTKASLYGAILFTL). Topologically, residues 200 to 209 (QQTRWLPVSK) are cytoplasmic. The chain crosses the membrane as a helical span at residues 210–230 (ASLIFVFTMFMVSCKVFLTAT). The Lumenal portion of the chain corresponds to 231 to 234 (HSHS). Residues 235 to 255 (SPFDILEGYICPVLFGATWGG) form a helical membrane-spanning segment. The Cytoplasmic segment spans residues 256–298 (DHHHDNHGAPHGMGLGTQHSGLPAKAKEELGEGSRKKKTKKAD). Residues 260–298 (DNHGAPHGMGLGTQHSGLPAKAKEELGEGSRKKKTKKAD) are disordered. Over residues 280–289 (KAKEELGEGS) the composition is skewed to basic and acidic residues.

Belongs to the TMEM38 family. Homotrimer; conformation seems to be controled by binding to diacylglycerol (DAG). In terms of tissue distribution, expressed at high levels in heart and striated muscle. Also detected in brain, lung and kidney.

It is found in the sarcoplasmic reticulum membrane. The protein resides in the nucleus membrane. The catalysed reaction is K(+)(in) = K(+)(out). Its activity is regulated as follows. Channel activity is activated by a change of voltage within the sarcoplasmic reticulum lumen and blocked by luminal high Ca(2+) levels. Intracellular monovalent cation channel required for maintenance of rapid intracellular calcium release. Acts as a potassium counter-ion channel that functions in synchronization with calcium release from intracellular stores. Opened by a change of voltage within the sarcoplasmic reticulum lumen. This is Trimeric intracellular cation channel type A (Tmem38a) from Mus musculus (Mouse).